The chain runs to 182 residues: Ribosome-recycling factor (182 aa).

The interval 136-156 is disordered; the sequence is VKKQEKDGDFSEDQSRDEQDS.

Belongs to the RRF family.

The protein resides in the cytoplasm. Its function is as follows. Responsible for the release of ribosomes from messenger RNA at the termination of protein biosynthesis. May increase the efficiency of translation by recycling ribosomes from one round of translation to another. In Synechococcus sp. (strain CC9902), this protein is Ribosome-recycling factor.